A 553-amino-acid chain; its full sequence is Cytokine-like nuclear factor N-PAC (553 aa).

The region spanning 8 to 66 (LGDLVWGKLGRYPPWPGKIVNPPKDLKKPRGKKCFFVKFFGTEDHAWIKVEQLKPYHAH) is the PWWP domain. Composition is skewed to basic and acidic residues over residues 92-145 (RAKG…EGKK) and 162-182 (RAQE…KDLS). The tract at residues 92–190 (RAKGKDQTSS…LSIPESSTVK (99 aa)) is disordered. A Phosphoserine modification is found at Ser-130. Lys-135 is covalently cross-linked (Glycyl lysine isopeptide (Lys-Gly) (interchain with G-Cter in SUMO2)). Phosphoserine is present on Ser-167. The a.T hook DNA-binding region spans 168-180 (PRKRGRPPKDEKD). Glycyl lysine isopeptide (Lys-Gly) (interchain with G-Cter in SUMO2) cross-links involve residues Lys-176, Lys-179, Lys-201, and Lys-211. Residues 214–217 (DPHF) form an interaction with histone H3 region. An interaction with KDM1B region spans residues 216–225 (HFHHFLLSQT). Residues Lys-227, Lys-237, Lys-240, and Lys-269 each participate in a glycyl lysine isopeptide (Lys-Gly) (interchain with G-Cter in SUMO2) cross-link. The interval 261-553 (GSVTPTDKKI…MSAVYRAYIH (293 aa)) is dehydrogenase domain. NAD(+) is bound at residue 271–285 (GFLGLGLMGSGIVSN). A Glycyl lysine isopeptide (Lys-Gly) (interchain with G-Cter in SUMO2) cross-link involves residue Lys-302. NAD(+)-binding residues include Thr-362 and Lys-505. Residue Ser-540 is modified to Phosphoserine.

It belongs to the HIBADH-related family. NP60 subfamily. In terms of assembly, homotetramere. Interacts with MAPK14. Interacts with KDM1B at nucleosomes; this interaction stimulates H3K4me1 and H3K4me2 demethylation. Binds to mononucleosomes. Interacts with GATA4; the interaction is required for a synergistic activation of GATA4 target genes transcription.

The protein resides in the nucleus. It localises to the chromosome. Cytokine-like nuclear factor with chromatin gene reader activity involved in chromatin modification and regulation of gene expression. Acts as a nucleosome-destabilizing factor that is recruited to genes during transcriptional activation. Recognizes and binds histone H3 without a preference for specific epigenetic markers and also binds DNA. Interacts with KDM1B and promotes its histone demethylase activity by facilitating the capture of H3 tails, they form a multifunctional enzyme complex that modifies transcribed chromatin and facilitates Pol II transcription through nucleosomes. Stimulates the acetylation of 'Lys-56' of nucleosomal histone H3 (H3K56ac) by EP300. With GATA4, co-binds a defined set of heart development genes and coregulates their expression during cardiomyocyte differentiation. Regulates p38 MAP kinase activity by mediating stress activation of MAPK14/p38alpha and specifically regulating MAPK14 signaling. Indirectly promotes phosphorylation of MAPK14 and activation of ATF2. The phosphorylation of MAPK14 requires upstream activity of MAP2K4 and MAP2K6. In Bos taurus (Bovine), this protein is Cytokine-like nuclear factor N-PAC (GLYR1).